A 93-amino-acid chain; its full sequence is Mitochondrial import inner membrane translocase subunit TIM10 (93 aa).

Positions 1–31 (MSFLGFGGGQPQLSSQQKIQAAEAELDLVTD) are interaction with transmembrane regions of transmembrane proteins in transit. A Twin CX3C motif motif is present at residues 40-65 (CYKKCINTSYSEGELNKNESSCLDRC). Intrachain disulfides connect cysteine 40–cysteine 65 and cysteine 44–cysteine 61. The tract at residues 73 to 93 (NVQVGENMQKMGQSFNAAGKF) is required for heterohexamerization.

This sequence belongs to the small Tim family. Heterohexamer; composed of 3 copies of TIM9 and 3 copies of TIM10, named soluble 70 kDa complex. Associates directly with the TIM12 component of the TIM22 complex, whose core is composed of TIM18, TIM22 and TIM54. Interacts with the transmembrane regions of multi-pass transmembrane proteins in transit.

It is found in the mitochondrion inner membrane. It localises to the mitochondrion intermembrane space. Mitochondrial intermembrane chaperone that participates in the import and insertion of multi-pass transmembrane proteins into the mitochondrial inner membrane. Also required for the transfer of beta-barrel precursors from the TOM complex to the sorting and assembly machinery (SAM complex) of the outer membrane. Acts as a chaperone-like protein that protects the hydrophobic precursors from aggregation and guide them through the mitochondrial intermembrane space. Compared to TIM9, it may function as a substrate sensor. In Saccharomyces cerevisiae (strain ATCC 204508 / S288c) (Baker's yeast), this protein is Mitochondrial import inner membrane translocase subunit TIM10 (TIM10).